We begin with the raw amino-acid sequence, 417 residues long: Gamma-glutamyl phosphate reductase (417 aa).

This sequence belongs to the gamma-glutamyl phosphate reductase family.

It localises to the cytoplasm. The enzyme catalyses L-glutamate 5-semialdehyde + phosphate + NADP(+) = L-glutamyl 5-phosphate + NADPH + H(+). It functions in the pathway amino-acid biosynthesis; L-proline biosynthesis; L-glutamate 5-semialdehyde from L-glutamate: step 2/2. Its function is as follows. Catalyzes the NADPH-dependent reduction of L-glutamate 5-phosphate into L-glutamate 5-semialdehyde and phosphate. The product spontaneously undergoes cyclization to form 1-pyrroline-5-carboxylate. The polypeptide is Gamma-glutamyl phosphate reductase (Pectobacterium carotovorum subsp. carotovorum (strain PC1)).